A 166-amino-acid chain; its full sequence is Cofilin-1 (166 aa).

At Ala-2 the chain carries N-acetylalanine. Residue Ser-3 is modified to Phosphoserine; by NRK. Positions 4–153 (GVAVSDGVIK…KDRCTLAEKL (150 aa)) constitute an ADF-H domain. Residue Ser-8 is modified to Phosphoserine. Lys-13 is subject to N6-acetyllysine. Phosphothreonine is present on Thr-25. A Nuclear localization signal motif is present at residues 30-34 (KKRKK). A Phosphoserine modification is found at Ser-41. Thr-63 bears the Phosphothreonine mark. At Tyr-68 the chain carries Phosphotyrosine. Lys-73 carries the N6-acetyllysine modification. Tyr-82 is subject to Phosphotyrosine. Ser-108 carries the post-translational modification Phosphoserine. Residue Lys-132 forms a Glycyl lysine isopeptide (Lys-Gly) (interchain with G-Cter in SUMO2) linkage. At Tyr-140 the chain carries Phosphotyrosine. Residue Lys-144 is modified to N6-acetyllysine. Position 156 is a phosphoserine (Ser-156).

The protein belongs to the actin-binding proteins ADF family. In terms of assembly, can bind G- and F-actin in a 1:1 ratio of cofilin to actin. It is a major component of intranuclear and cytoplasmic actin rods. Interacts with the subcortical maternal complex (SCMC) via interaction with TLE6 isoform 1 and NLRP5. Interacts with C9orf72. (Microbial infection) Interacts with human respiratory syncytial virus (HRSV) matrix protein; this interaction probably facilitates viral replication. Inactivated by phosphorylation on Ser-3. Phosphorylated on Ser-3 in resting cells. Dephosphorylated by PDXP/chronophin; this restores its activity in promoting actin filament depolymerization. The phosphorylation of Ser-24 may prevent recognition of the nuclear localization signal. Phosphorylated via a ARRB1-RAC1-LIMK1-PAK1 cascade upon active ligand stimulation of atypical chemokine receptor ACKR2. Widely distributed in various tissues.

It is found in the nucleus matrix. The protein resides in the cytoplasm. It localises to the cytoskeleton. The protein localises to the cell projection. Its subcellular location is the ruffle membrane. It is found in the lamellipodium membrane. The protein resides in the lamellipodium. It localises to the growth cone. The protein localises to the axon. Binds to F-actin and exhibits pH-sensitive F-actin depolymerizing activity. In conjunction with the subcortical maternal complex (SCMC), plays an essential role for zygotes to progress beyond the first embryonic cell divisions via regulation of actin dynamics. Required for the centralization of the mitotic spindle and symmetric division of zygotes. Plays a role in the regulation of cell morphology and cytoskeletal organization in epithelial cells. Required for the up-regulation of atypical chemokine receptor ACKR2 from endosomal compartment to cell membrane, increasing its efficiency in chemokine uptake and degradation. Required for neural tube morphogenesis and neural crest cell migration. This is Cofilin-1 (CFL1) from Homo sapiens (Human).